The sequence spans 95 residues: uncharacterized protein (95 aa).

A signal peptide spans 1-21 (MKKITLFFTALLCLFSTSVLA).

This is an uncharacterized protein from Haemophilus influenzae (strain ATCC 51907 / DSM 11121 / KW20 / Rd).